A 580-amino-acid polypeptide reads, in one-letter code: Efflux pump dotC (580 aa).

The span at Met-1 to Glu-34 shows a compositional bias: basic and acidic residues. Residues Met-1–Leu-45 form a disordered region. N-linked (GlcNAc...) asparagine glycosylation is present at Asn-10. The segment covering Glu-35–Ala-44 has biased composition (acidic residues). The chain crosses the membrane as a helical span at residues Pro-49 to Leu-69. Asn-86 is a glycosylation site (N-linked (GlcNAc...) asparagine). Helical transmembrane passes span Ala-89 to Trp-109, Ala-127 to Thr-147, Gly-153 to Leu-173, Gly-181 to Phe-201, Trp-209 to Leu-229, Phe-242 to Phe-262, Ser-275 to Val-295, Ala-318 to Leu-338, Pro-348 to Ala-368, Leu-380 to Phe-400, Leu-409 to Val-429, Thr-444 to Tyr-466, and Ser-519 to Val-539. The interval Lys-559–Ser-580 is disordered.

This sequence belongs to the major facilitator superfamily. TCR/Tet family.

Its subcellular location is the cell membrane. The protein resides in the vacuole membrane. In terms of biological role, efflux pump; part of the gene cluster that mediates the biosynthesis of dothistromin (DOTH), a polyketide toxin very similar in structure to the aflatoxin precursor, versicolorin B. One function of dotC may be to transport early-stage dothistromin biosynthetic intermediates from the cytoplasm into vacuoles, thereby affecting the rate of dothistromin production. The protein is Efflux pump dotC of Dothistroma septosporum (strain NZE10 / CBS 128990) (Red band needle blight fungus).